Here is a 386-residue protein sequence, read N- to C-terminus: L-lactate dehydrogenase (386 aa).

An FMN hydroxy acid dehydrogenase domain is found at 1–380 (MIISAASDYR…SGDALSRVTR (380 aa)). Tyrosine 24 provides a ligand contact to substrate. FMN is bound by residues serine 106 and glutamine 127. Tyrosine 129 lines the substrate pocket. Threonine 155 provides a ligand contact to FMN. Arginine 164 lines the substrate pocket. Lysine 251 provides a ligand contact to FMN. The active-site Proton acceptor is histidine 275. Arginine 278 contributes to the substrate binding site. 306-330 (DSGIRSGLDVVRMLALGADAVLLGR) is an FMN binding site.

Belongs to the FMN-dependent alpha-hydroxy acid dehydrogenase family. FMN serves as cofactor.

It localises to the cell inner membrane. It carries out the reaction (S)-lactate + A = pyruvate + AH2. Functionally, catalyzes the conversion of L-lactate to pyruvate. Is coupled to the respiratory chain. This chain is L-lactate dehydrogenase, found in Xanthomonas campestris pv. campestris (strain 8004).